The primary structure comprises 893 residues: Genome polyprotein 2 (893 aa).

The region spanning 109-229 (TAEFKSGFCY…GCEYMLYPVG (121 aa)) is the Peptidase C6 domain. Active-site for helper component proteinase activity residues include Cys117 and His189. Positions 502-539 (WVTLNSGDDDDDQSGGGGGGPQTPGGQPPVPHTRGTHQ) are disordered. A compositionally biased stretch (gly residues) spans 515–524 (SGGGGGGPQT).

This sequence belongs to the bymoviruses polyprotein 2 family. Post-translationally, the viral RNA2 of bymoviruses is expressed as a single polyprotein which undergoes post-translational proteolytic processing resulting in the production of at least two individual proteins. The HC-pro cleaves its C-terminus autocatalytically (Potential).

It catalyses the reaction Hydrolyzes a Gly-|-Gly bond at its own C-terminus, commonly in the sequence -Tyr-Xaa-Val-Gly-|-Gly, in the processing of the potyviral polyprotein.. The chain is Genome polyprotein 2 (RNA2) from Barley mild mosaic virus (strain ASL) (BaMMV).